A 381-amino-acid polypeptide reads, in one-letter code: Dual-specificity RNA methyltransferase RlmN (381 aa).

The active-site Proton acceptor is the E86. Positions 105–338 constitute a Radical SAM core domain; that stretch reads RHARYTICVS…CTIRQSKGLD (234 aa). The cysteines at positions 112 and 343 are disulfide-linked. [4Fe-4S] cluster contacts are provided by C119, C123, and C126. Residues 169–170, S201, 224–226, and N300 each bind S-adenosyl-L-methionine; these read GE and SLH. C343 functions as the S-methylcysteine intermediate in the catalytic mechanism. The interval 351-381 is disordered; that stretch reads ENPKFRANVSGNSAAKTEEKPTNDKTNVSKK.

Belongs to the radical SAM superfamily. RlmN family. Requires [4Fe-4S] cluster as cofactor.

It localises to the cytoplasm. It catalyses the reaction adenosine(2503) in 23S rRNA + 2 reduced [2Fe-2S]-[ferredoxin] + 2 S-adenosyl-L-methionine = 2-methyladenosine(2503) in 23S rRNA + 5'-deoxyadenosine + L-methionine + 2 oxidized [2Fe-2S]-[ferredoxin] + S-adenosyl-L-homocysteine. The enzyme catalyses adenosine(37) in tRNA + 2 reduced [2Fe-2S]-[ferredoxin] + 2 S-adenosyl-L-methionine = 2-methyladenosine(37) in tRNA + 5'-deoxyadenosine + L-methionine + 2 oxidized [2Fe-2S]-[ferredoxin] + S-adenosyl-L-homocysteine. Its function is as follows. Specifically methylates position 2 of adenine 2503 in 23S rRNA and position 2 of adenine 37 in tRNAs. m2A2503 modification seems to play a crucial role in the proofreading step occurring at the peptidyl transferase center and thus would serve to optimize ribosomal fidelity. The sequence is that of Dual-specificity RNA methyltransferase RlmN from Campylobacter concisus (strain 13826).